The following is a 511-amino-acid chain: Putative CBL-interacting protein kinase 13 (511 aa).

Residues 25-279 (FEVGKLLGQG…AEGIMENEWF (255 aa)) form the Protein kinase domain. Residues 31 to 39 (LGQGNFAKV) and K54 contribute to the ATP site. The Proton acceptor role is filled by D147. The segment at 165–194 (DFGLSAVADGMRRDGLFHTFCGTPAYVAPE) is activation loop. The segment at 307–340 (VDAPTSPPDTPRTVDSGDVGAAPTRPRKAGSLTS) is disordered. The 63-residue stretch at 321–383 (DSGDVGAAPT…PGFDLSGLFD (63 aa)) folds into the NAF domain. Positions 400–429 (KHTARFVSAAPVEVIVATLEAAAAAAGMAV) are PPI.

It belongs to the protein kinase superfamily. CAMK Ser/Thr protein kinase family. SNF1 subfamily. Mn(2+) is required as a cofactor.

It catalyses the reaction L-seryl-[protein] + ATP = O-phospho-L-seryl-[protein] + ADP + H(+). It carries out the reaction L-threonyl-[protein] + ATP = O-phospho-L-threonyl-[protein] + ADP + H(+). Its function is as follows. CIPK serine-threonine protein kinases interact with CBL proteins. Binding of a CBL protein to the regulatory NAF domain of CIPK protein lead to the activation of the kinase in a calcium-dependent manner. In Oryza sativa subsp. japonica (Rice), this protein is Putative CBL-interacting protein kinase 13 (CIPK13).